Here is a 360-residue protein sequence, read N- to C-terminus: Phospho-N-acetylmuramoyl-pentapeptide-transferase (360 aa).

Helical transmembrane passes span 26-46 (AIVSLLTALFISLWMGPRMIA), 72-92 (PTMGGIMILTAIVVSVLLWAY), 94-114 (SNPYVWCVLVVLVGYGIIGFV), 132-152 (WKYFWMSVIALGVAFALYLAG), 168-188 (VMPQLGLFYVLLAYFVIVGTG), 199-219 (GLAIMPTVFVAAGFALVAWAT), 236-256 (AGELVIVCTAIVGAGLGFLWF), 263-283 (VFMGDVGSLALGGALGIIAVL), 288-308 (FLLVIMGGVFVVETLSVILQV), and 338-358 (VIVRFWIISLMLVLIGLATLK).

Belongs to the glycosyltransferase 4 family. MraY subfamily. Mg(2+) serves as cofactor.

It localises to the cell inner membrane. It carries out the reaction UDP-N-acetyl-alpha-D-muramoyl-L-alanyl-gamma-D-glutamyl-meso-2,6-diaminopimeloyl-D-alanyl-D-alanine + di-trans,octa-cis-undecaprenyl phosphate = di-trans,octa-cis-undecaprenyl diphospho-N-acetyl-alpha-D-muramoyl-L-alanyl-D-glutamyl-meso-2,6-diaminopimeloyl-D-alanyl-D-alanine + UMP. Its pathway is cell wall biogenesis; peptidoglycan biosynthesis. Functionally, catalyzes the initial step of the lipid cycle reactions in the biosynthesis of the cell wall peptidoglycan: transfers peptidoglycan precursor phospho-MurNAc-pentapeptide from UDP-MurNAc-pentapeptide onto the lipid carrier undecaprenyl phosphate, yielding undecaprenyl-pyrophosphoryl-MurNAc-pentapeptide, known as lipid I. This Citrobacter koseri (strain ATCC BAA-895 / CDC 4225-83 / SGSC4696) protein is Phospho-N-acetylmuramoyl-pentapeptide-transferase.